Consider the following 760-residue polypeptide: Acetyl-CoA decarbonylase/synthase complex subunit alpha 1 (760 aa).

Residues Cys-56, Cys-59, Cys-60, Cys-62, Cys-67, and Cys-77 each contribute to the [4Fe-4S] cluster site. His-100 provides a ligand contact to CO. His-231, Cys-259, and Cys-298 together coordinate [Ni-4Fe-4S] cluster. 4Fe-4S ferredoxin-type domains are found at residues 381 to 410 and 418 to 450; these read KKLQKEAKRCLGCGDCERVCPNDLPIVEAM and FEGLADLFDRCVGCARCESECPTKLRVMNMIED. Cys-390, Cys-393, Cys-396, Cys-400, Cys-428, Cys-431, Cys-434, and Cys-438 together coordinate [4Fe-4S] cluster. [Ni-4Fe-4S] cluster-binding residues include Cys-496, Cys-525, and Cys-560.

This sequence belongs to the Ni-containing carbon monoxide dehydrogenase family. Heterotetramer of two alpha and two epsilon subunits. The ACDS complex is made up of alpha, epsilon, beta, gamma and delta subunits with a probable stoichiometry of (alpha(2)epsilon(2))(4)-beta(8)-(gamma(1)delta(1))(8). [4Fe-4S] cluster serves as cofactor. It depends on [Ni-4Fe-4S] cluster as a cofactor.

The enzyme catalyses CO + 2 oxidized [2Fe-2S]-[ferredoxin] + H2O = 2 reduced [2Fe-2S]-[ferredoxin] + CO2 + 2 H(+). Part of the ACDS complex that catalyzes the reversible cleavage of acetyl-CoA, allowing autotrophic growth from CO(2). The alpha-epsilon subcomponent functions as a carbon monoxide dehydrogenase. The protein is Acetyl-CoA decarbonylase/synthase complex subunit alpha 1 of Methanopyrus kandleri (strain AV19 / DSM 6324 / JCM 9639 / NBRC 100938).